A 72-amino-acid polypeptide reads, in one-letter code: Large ribosomal subunit protein bL31c (72 aa).

It belongs to the bacterial ribosomal protein bL31 family. Type A subfamily. As to quaternary structure, part of the 50S ribosomal subunit.

The protein resides in the plastid. The protein localises to the chloroplast. In terms of biological role, binds the 23S rRNA. The polypeptide is Large ribosomal subunit protein bL31c (Trieres chinensis (Marine centric diatom)).